A 283-amino-acid polypeptide reads, in one-letter code: Acetyl-coenzyme A carboxylase carboxyl transferase subunit beta (283 aa).

Residues 29 to 283 (LWVACPKCQQ…LKLHERGAHY (255 aa)) form the CoA carboxyltransferase N-terminal domain. 4 residues coordinate Zn(2+): cysteine 33, cysteine 36, cysteine 51, and cysteine 54. Residues 33-54 (CPKCQQSIYHKDLGYYRTCPVC) form a C4-type zinc finger.

This sequence belongs to the AccD/PCCB family. Acetyl-CoA carboxylase is a heterohexamer composed of biotin carboxyl carrier protein (AccB), biotin carboxylase (AccC) and two subunits each of ACCase subunit alpha (AccA) and ACCase subunit beta (AccD). Requires Zn(2+) as cofactor.

The protein resides in the cytoplasm. It catalyses the reaction N(6)-carboxybiotinyl-L-lysyl-[protein] + acetyl-CoA = N(6)-biotinyl-L-lysyl-[protein] + malonyl-CoA. The protein operates within lipid metabolism; malonyl-CoA biosynthesis; malonyl-CoA from acetyl-CoA: step 1/1. Functionally, component of the acetyl coenzyme A carboxylase (ACC) complex. Biotin carboxylase (BC) catalyzes the carboxylation of biotin on its carrier protein (BCCP) and then the CO(2) group is transferred by the transcarboxylase to acetyl-CoA to form malonyl-CoA. This chain is Acetyl-coenzyme A carboxylase carboxyl transferase subunit beta, found in Latilactobacillus sakei subsp. sakei (strain 23K) (Lactobacillus sakei subsp. sakei).